The sequence spans 359 residues: Biotin synthase (359 aa).

Residues 1 to 22 (MQSTPLNFVPNAAKAPVTPGQA) form a disordered region. One can recognise a Radical SAM core domain in the interval 58–285 (NAVQLSTLLS…KAMVRLSAGR (228 aa)). Residues C73, C77, and C80 each contribute to the [4Fe-4S] cluster site. Positions 117, 148, 208, and 280 each coordinate [2Fe-2S] cluster.

Belongs to the radical SAM superfamily. Biotin synthase family. As to quaternary structure, homodimer. Requires [4Fe-4S] cluster as cofactor. [2Fe-2S] cluster serves as cofactor.

It catalyses the reaction (4R,5S)-dethiobiotin + (sulfur carrier)-SH + 2 reduced [2Fe-2S]-[ferredoxin] + 2 S-adenosyl-L-methionine = (sulfur carrier)-H + biotin + 2 5'-deoxyadenosine + 2 L-methionine + 2 oxidized [2Fe-2S]-[ferredoxin]. The protein operates within cofactor biosynthesis; biotin biosynthesis; biotin from 7,8-diaminononanoate: step 2/2. Catalyzes the conversion of dethiobiotin (DTB) to biotin by the insertion of a sulfur atom into dethiobiotin via a radical-based mechanism. In Ralstonia pickettii (strain 12J), this protein is Biotin synthase.